Here is an 87-residue protein sequence, read N- to C-terminus: Putative regulatory protein CHY_1489 (87 aa).

It belongs to the RemA family.

The polypeptide is Putative regulatory protein CHY_1489 (Carboxydothermus hydrogenoformans (strain ATCC BAA-161 / DSM 6008 / Z-2901)).